Consider the following 854-residue polypeptide: DNA mismatch repair protein MutS (854 aa).

ATP is bound at residue 614–621; sequence GPNMGGKS.

The protein belongs to the DNA mismatch repair MutS family.

In terms of biological role, this protein is involved in the repair of mismatches in DNA. It is possible that it carries out the mismatch recognition step. This protein has a weak ATPase activity. The polypeptide is DNA mismatch repair protein MutS (Sodalis glossinidius (strain morsitans)).